Reading from the N-terminus, the 152-residue chain is Ribosome maturation factor RimP (152 aa).

Belongs to the RimP family.

The protein localises to the cytoplasm. Functionally, required for maturation of 30S ribosomal subunits. The protein is Ribosome maturation factor RimP of Yersinia pestis.